Reading from the N-terminus, the 365-residue chain is Probable tRNA pseudouridine synthase B (365 aa).

Residue aspartate 43 is the Nucleophile of the active site. Residues 209–285 enclose the PUA domain; the sequence is YPKIVVKRSA…DHIFLEADDG (77 aa). A disordered region spans residues 300-365; that stretch reads SGSGLHKDIQ…GKERHGRDHQ (66 aa). Composition is skewed to basic and acidic residues over residues 304 to 318, 326 to 336, and 354 to 365; these read LHKD…KDTR, TGPEKTADRVW, and GGGKERHGRDHQ.

It belongs to the pseudouridine synthase TruB family. Type 2 subfamily.

It carries out the reaction uridine(55) in tRNA = pseudouridine(55) in tRNA. Could be responsible for synthesis of pseudouridine from uracil-55 in the psi GC loop of transfer RNAs. In Thermoplasma acidophilum (strain ATCC 25905 / DSM 1728 / JCM 9062 / NBRC 15155 / AMRC-C165), this protein is Probable tRNA pseudouridine synthase B.